Here is a 959-residue protein sequence, read N- to C-terminus: Glycine dehydrogenase (decarboxylating) (959 aa).

Lys704 is modified (N6-(pyridoxal phosphate)lysine).

Belongs to the GcvP family. As to quaternary structure, the glycine cleavage system is composed of four proteins: P, T, L and H. It depends on pyridoxal 5'-phosphate as a cofactor.

It carries out the reaction N(6)-[(R)-lipoyl]-L-lysyl-[glycine-cleavage complex H protein] + glycine + H(+) = N(6)-[(R)-S(8)-aminomethyldihydrolipoyl]-L-lysyl-[glycine-cleavage complex H protein] + CO2. In terms of biological role, the glycine cleavage system catalyzes the degradation of glycine. The P protein binds the alpha-amino group of glycine through its pyridoxal phosphate cofactor; CO(2) is released and the remaining methylamine moiety is then transferred to the lipoamide cofactor of the H protein. The polypeptide is Glycine dehydrogenase (decarboxylating) (Parasynechococcus marenigrum (strain WH8102)).